We begin with the raw amino-acid sequence, 125 residues long: SOSS complex subunit C homolog B (125 aa).

2 disordered regions span residues 44 to 73 (PAPQ…RAAF) and 105 to 125 (PATP…NNPK).

It belongs to the SOSS-C family.

The chain is SOSS complex subunit C homolog B from Drosophila willistoni (Fruit fly).